A 59-amino-acid polypeptide reads, in one-letter code: Large ribosomal subunit protein bL32 (59 aa).

This sequence belongs to the bacterial ribosomal protein bL32 family.

In Polynucleobacter necessarius subsp. necessarius (strain STIR1), this protein is Large ribosomal subunit protein bL32.